We begin with the raw amino-acid sequence, 291 residues long: Nitrogenase iron protein 1 (291 aa).

Glycine 10–serine 17 contacts ATP. Cysteine 98 is a binding site for [4Fe-4S] cluster. Arginine 101 carries the ADP-ribosylarginine; by dinitrogenase reductase ADP-ribosyltransferase modification. Cysteine 133 provides a ligand contact to [4Fe-4S] cluster.

Belongs to the NifH/BchL/ChlL family. As to quaternary structure, homodimer. [4Fe-4S] cluster serves as cofactor. The reversible ADP-ribosylation of Arg-101 inactivates the nitrogenase reductase and regulates nitrogenase activity.

The catalysed reaction is N2 + 8 reduced [2Fe-2S]-[ferredoxin] + 16 ATP + 16 H2O = H2 + 8 oxidized [2Fe-2S]-[ferredoxin] + 2 NH4(+) + 16 ADP + 16 phosphate + 6 H(+). The key enzymatic reactions in nitrogen fixation are catalyzed by the nitrogenase complex, which has 2 components: the iron protein (component 2) and a component 1 which is either a molybdenum-iron protein, a vanadium-iron, or an iron-iron protein. This is Nitrogenase iron protein 1 (nifH1) from Azotobacter chroococcum mcd 1.